Here is a 648-residue protein sequence, read N- to C-terminus: Mitotic interactor and substrate of PLK1 (648 aa).

Position 77 is a phosphoserine; by CDK1 (Ser77). A phosphothreonine mark is found at Thr149 and Thr190. At Ser220 the chain carries Phosphoserine. Disordered stretches follow at residues 242-383 and 430-460; these read VNDP…PEAR and KATESPRHVSESSGRSLSSKQEWSKPPGKAT. The residue at position 253 (Ser253) is a Phosphoserine; by CDK1. Positions 255–281 are enriched in basic and acidic residues; that stretch reads ETPKETPIEREIRLAQEREAELREQRG. A Phosphothreonine; by CDK1 modification is found at Thr256. At Ser318 the chain carries Phosphoserine. Residues 325–339 are compositionally biased toward basic and acidic residues; it reads MVQETQREEDHRREG. Position 347 is a phosphothreonine; by CDK1 (Thr347). Residues 349–367 show a composition bias toward polar residues; it reads DWPSQDPQPGLQRSLSSDC. Phosphoserine occurs at positions 352 and 364. Phosphoserine; by PLK1 is present on residues Ser365 and Ser439. Over residues 440 to 450 the composition is skewed to polar residues; that stretch reads ESSGRSLSSKQ. Phosphoserine is present on residues Ser507 and Ser509. Residues 511 to 534 are a coiled coil; sequence DLLEREMESVLRREREVAEERRNA. Positions 539–568 are disordered; that stretch reads VFSPVPAEDESHEQDSRSSSRASGITGSYS. Residue Ser541 is modified to Phosphoserine; by CDK1. The residue at position 554 (Ser554) is a Phosphoserine; by PLK1. Over residues 557–568 the composition is skewed to polar residues; sequence SSRASGITGSYS. Position 644 is a phosphoserine (Ser644).

The protein belongs to the MISP family. As to quaternary structure, associates with F-actin. Interacts with DCTN1; this interaction regulates DCTN1 distribution at the cell cortex. Interacts with PTK2/FAK and MAPRE1. Phosphorylated by CDK1 and PLK1. CDK1 is the priming kinase for PLK1 phosphorylation. Phosphorylation by PLK1 is required for proper spindle orientation at metaphase.

Its subcellular location is the cell junction. The protein resides in the focal adhesion. It is found in the cytoplasm. The protein localises to the cytoskeleton. It localises to the cell cortex. In terms of biological role, plays a role in mitotic spindle orientation and mitotic progression. Regulates the distribution of dynactin at the cell cortex in a PLK1-dependent manner, thus stabilizing cortical and astral microtubule attachments required for proper mitotic spindle positioning. May link microtubules to the actin cytoskeleton and focal adhesions. May be required for directed cell migration and centrosome orientation. May also be necessary for proper stacking of the Golgi apparatus. The chain is Mitotic interactor and substrate of PLK1 from Mus musculus (Mouse).